The primary structure comprises 147 residues: UPF0306 protein YhbP (147 aa).

It belongs to the UPF0306 family.

This is UPF0306 protein YhbP from Escherichia coli O157:H7.